The chain runs to 555 residues: Phosphomethylpyrimidine synthase (555 aa).

Substrate contacts are provided by residues Asn191, Met220, Tyr249, His285, 305–307, 346–349, and Glu385; these read SRG and DGLR. His389 provides a ligand contact to Zn(2+). Tyr412 serves as a coordination point for substrate. Position 453 (His453) interacts with Zn(2+). [4Fe-4S] cluster-binding residues include Cys533, Cys536, and Cys541.

Belongs to the ThiC family. In terms of assembly, homodimer. Requires [4Fe-4S] cluster as cofactor.

The catalysed reaction is 5-amino-1-(5-phospho-beta-D-ribosyl)imidazole + S-adenosyl-L-methionine = 4-amino-2-methyl-5-(phosphooxymethyl)pyrimidine + CO + 5'-deoxyadenosine + formate + L-methionine + 3 H(+). It functions in the pathway cofactor biosynthesis; thiamine diphosphate biosynthesis. Functionally, catalyzes the synthesis of the hydroxymethylpyrimidine phosphate (HMP-P) moiety of thiamine from aminoimidazole ribotide (AIR) in a radical S-adenosyl-L-methionine (SAM)-dependent reaction. The protein is Phosphomethylpyrimidine synthase of Ehrlichia ruminantium (strain Welgevonden).